The primary structure comprises 124 residues: Small ribosomal subunit protein uS12 (124 aa).

Aspartate 89 carries the 3-methylthioaspartic acid modification. The interval alanine 105–alanine 124 is disordered. Positions serine 113–alanine 124 are enriched in basic residues.

It belongs to the universal ribosomal protein uS12 family. In terms of assembly, part of the 30S ribosomal subunit. Contacts proteins S8 and S17. May interact with IF1 in the 30S initiation complex.

In terms of biological role, with S4 and S5 plays an important role in translational accuracy. Interacts with and stabilizes bases of the 16S rRNA that are involved in tRNA selection in the A site and with the mRNA backbone. Located at the interface of the 30S and 50S subunits, it traverses the body of the 30S subunit contacting proteins on the other side and probably holding the rRNA structure together. The combined cluster of proteins S8, S12 and S17 appears to hold together the shoulder and platform of the 30S subunit. In Synechococcus elongatus (strain ATCC 33912 / PCC 7942 / FACHB-805) (Anacystis nidulans R2), this protein is Small ribosomal subunit protein uS12 (rpsL).